The sequence spans 145 residues: uncharacterized protein (145 aa).

A disordered region spans residues 37-123; it reads GKGTNTAKSS…MDREASYFAP (87 aa). Polar residues predominate over residues 38-63; it reads KGTNTAKSSGGNNGTNLNAKRSNTTQ.

This is an uncharacterized protein from Caenorhabditis elegans.